We begin with the raw amino-acid sequence, 487 residues long: UDP-N-acetylmuramate--L-alanine ligase (487 aa).

129–135 (GTHGKTT) lines the ATP pocket.

This sequence belongs to the MurCDEF family.

Its subcellular location is the cytoplasm. The catalysed reaction is UDP-N-acetyl-alpha-D-muramate + L-alanine + ATP = UDP-N-acetyl-alpha-D-muramoyl-L-alanine + ADP + phosphate + H(+). The protein operates within cell wall biogenesis; peptidoglycan biosynthesis. In terms of biological role, cell wall formation. This is UDP-N-acetylmuramate--L-alanine ligase from Aliivibrio salmonicida (strain LFI1238) (Vibrio salmonicida (strain LFI1238)).